A 472-amino-acid chain; its full sequence is PEP-dependent dihydroxyacetone kinase, phosphoryl donor subunit DhaM (472 aa).

One can recognise a PTS EIIA type-4 domain in the interval 1–135 (MVNLVIVSHS…HALEAKREQL (135 aa)). The active-site Tele-phosphohistidine intermediate is the H9. Residues 155–242 (ARSLAVVIKN…QLAEDNFGET (88 aa)) form the HPr domain. The active-site Pros-phosphohistidine intermediate is the H169. Positions 264-472 (QPVLCTVQAK…VKTQRFNRQG (209 aa)) are PTS EI-like, N-terminal part. H430 functions as the Tele-phosphohistidine intermediate in the catalytic mechanism.

Belongs to the PEP-utilizing enzyme family. Homodimer. The dihydroxyacetone kinase complex is composed of a homodimer of DhaM, a homodimer of DhaK and the subunit DhaL.

The enzyme catalyses dihydroxyacetone + phosphoenolpyruvate = dihydroxyacetone phosphate + pyruvate. Its pathway is polyol metabolism; glycerol degradation. Component of the dihydroxyacetone kinase complex, which is responsible for the phosphoenolpyruvate (PEP)-dependent phosphorylation of dihydroxyacetone. DhaM serves as the phosphoryl donor. Is phosphorylated by phosphoenolpyruvate in an EI- and HPr-dependent reaction, and a phosphorelay system on histidine residues finally leads to phosphoryl transfer to DhaL and dihydroxyacetone. This Escherichia coli (strain K12) protein is PEP-dependent dihydroxyacetone kinase, phosphoryl donor subunit DhaM.